Consider the following 347-residue polypeptide: Histone deacetylase 11 (347 aa).

A histone deacetylase region spans residues 14 to 318 (TRWPIVYSPR…ARIIADSILN (305 aa)). Histidine 143 is a catalytic residue.

It belongs to the histone deacetylase family. In terms of assembly, interacts with HDAC6.

The protein resides in the nucleus. The enzyme catalyses N(6)-acetyl-L-lysyl-[histone] + H2O = L-lysyl-[histone] + acetate. In terms of biological role, responsible for the deacetylation of lysine residues on the N-terminal part of the core histones (H2A, H2B, H3 and H4). Histone deacetylation gives a tag for epigenetic repression and plays an important role in transcriptional regulation, cell cycle progression and developmental events. Histone deacetylases act via the formation of large multiprotein complexes. The chain is Histone deacetylase 11 (HDAC11) from Macaca fascicularis (Crab-eating macaque).